A 214-amino-acid polypeptide reads, in one-letter code: Large ribosomal subunit protein uL3 (214 aa).

The disordered stretch occupies residues 129-157 (FGRGPMSHGSKNHRRPGSIGAGTTPGRVF).

It belongs to the universal ribosomal protein uL3 family. In terms of assembly, part of the 50S ribosomal subunit. Forms a cluster with proteins L14 and L19.

One of the primary rRNA binding proteins, it binds directly near the 3'-end of the 23S rRNA, where it nucleates assembly of the 50S subunit. The polypeptide is Large ribosomal subunit protein uL3 (Synechococcus sp. (strain JA-2-3B'a(2-13)) (Cyanobacteria bacterium Yellowstone B-Prime)).